The sequence spans 378 residues: tRNA (guanine(37)-N(1))-methyltransferase (378 aa).

S-adenosyl-L-methionine-binding positions include histidine 196, 234–235, 262–263, and asparagine 282; these read DL and DA.

This sequence belongs to the class I-like SAM-binding methyltransferase superfamily. TRM5/TYW2 family. In terms of assembly, monomer.

It localises to the mitochondrion matrix. Its subcellular location is the nucleus. The protein resides in the cytoplasm. It carries out the reaction guanosine(37) in tRNA + S-adenosyl-L-methionine = N(1)-methylguanosine(37) in tRNA + S-adenosyl-L-homocysteine + H(+). Functionally, specifically methylates the N1 position of guanosine-37 in various cytoplasmic and mitochondrial tRNAs. Methylation is not dependent on the nature of the nucleoside 5' of the target nucleoside. This is the first step in the biosynthesis of wybutosine (yW), a modified base adjacent to the anticodon of tRNAs and required for accurate decoding. This is tRNA (guanine(37)-N(1))-methyltransferase from Trichomonas vaginalis (strain ATCC PRA-98 / G3).